A 233-amino-acid chain; its full sequence is Uridylate kinase (233 aa).

Position 9-10 (9-10) interacts with ATP; the sequence is GS. G43 contributes to the UMP binding site. ATP-binding residues include G44 and R48. UMP is bound by residues D65 and 113-119; that span reads VTPGQTT. Positions 139, 145, and 148 each coordinate ATP.

Belongs to the UMP kinase family. In terms of assembly, homohexamer.

It localises to the cytoplasm. The enzyme catalyses UMP + ATP = UDP + ADP. It functions in the pathway pyrimidine metabolism; CTP biosynthesis via de novo pathway; UDP from UMP (UMPK route): step 1/1. Its activity is regulated as follows. Inhibited by UTP. Functionally, catalyzes the reversible phosphorylation of UMP to UDP. The polypeptide is Uridylate kinase (Methanosarcina barkeri (strain Fusaro / DSM 804)).